The primary structure comprises 192 residues: Ribose 1,5-bisphosphate phosphokinase PhnN (192 aa).

15 to 22 (GPSGAGKD) is a binding site for ATP.

This sequence belongs to the ribose 1,5-bisphosphokinase family.

The enzyme catalyses alpha-D-ribose 1,5-bisphosphate + ATP = 5-phospho-alpha-D-ribose 1-diphosphate + ADP. Its pathway is metabolic intermediate biosynthesis; 5-phospho-alpha-D-ribose 1-diphosphate biosynthesis; 5-phospho-alpha-D-ribose 1-diphosphate from D-ribose 5-phosphate (route II): step 3/3. In terms of biological role, catalyzes the phosphorylation of ribose 1,5-bisphosphate to 5-phospho-D-ribosyl alpha-1-diphosphate (PRPP). The protein is Ribose 1,5-bisphosphate phosphokinase PhnN of Brucella abortus biovar 1 (strain 9-941).